The chain runs to 370 residues: Glutamate 5-kinase (370 aa).

An ATP-binding site is contributed by K17. Substrate-binding residues include S56, D143, and N155. S175 to D176 lines the ATP pocket. A PUA domain is found at R280–S357.

The protein belongs to the glutamate 5-kinase family.

It localises to the cytoplasm. It carries out the reaction L-glutamate + ATP = L-glutamyl 5-phosphate + ADP. Its pathway is amino-acid biosynthesis; L-proline biosynthesis; L-glutamate 5-semialdehyde from L-glutamate: step 1/2. Catalyzes the transfer of a phosphate group to glutamate to form L-glutamate 5-phosphate. The polypeptide is Glutamate 5-kinase (Cereibacter sphaeroides (strain ATCC 17023 / DSM 158 / JCM 6121 / CCUG 31486 / LMG 2827 / NBRC 12203 / NCIMB 8253 / ATH 2.4.1.) (Rhodobacter sphaeroides)).